The following is a 231-amino-acid chain: Small ribosomal subunit protein uS3 (231 aa).

Residues 17 to 86 enclose the KH type-2 domain; the sequence is VEQYLNKELK…SPQVEVQQVA (70 aa).

Belongs to the universal ribosomal protein uS3 family. In terms of assembly, part of the 30S ribosomal subunit.

Its function is as follows. Binds the lower part of the 30S subunit head. The chain is Small ribosomal subunit protein uS3 from Methanocorpusculum labreanum (strain ATCC 43576 / DSM 4855 / Z).